The following is a 561-amino-acid chain: Laccase-1 (561 aa).

An N-terminal signal peptide occupies residues 1–20 (MKNSFFSSLAKFASLSLAFA). 2 Plastocyanin-like domains span residues 68 to 185 (VVQN…GPAT) and 191 to 337 (DLGM…YTGS). Residues Asn71, Asn87, and Asn114 are each glycosylated (N-linked (GlcNAc...) asparagine). The Cu cation site is built by His119, His121, His163, and His165. An intrachain disulfide couples Cys140 to Cys542. N-linked (GlcNAc...) asparagine glycosylation is found at Asn226, Asn284, Asn327, Asn391, and Asn398. The region spanning 396–525 (LLNWTDPTLL…ALQFVESESS (130 aa)) is the Plastocyanin-like 3 domain. Cu cation contacts are provided by His445, His448, His450, His504, Cys505, His506, and His510.

The protein belongs to the multicopper oxidase family. It depends on Cu cation as a cofactor.

It is found in the secreted. It carries out the reaction 4 hydroquinone + O2 = 4 benzosemiquinone + 2 H2O. In terms of biological role, lignin degradation and detoxification of lignin-derived products. This is Laccase-1 (lcc1) from Botryotinia fuckeliana (Noble rot fungus).